A 185-amino-acid polypeptide reads, in one-letter code: Elongation factor P (185 aa).

The protein belongs to the elongation factor P family.

The protein localises to the cytoplasm. Its pathway is protein biosynthesis; polypeptide chain elongation. Its function is as follows. Involved in peptide bond synthesis. Stimulates efficient translation and peptide-bond synthesis on native or reconstituted 70S ribosomes in vitro. Probably functions indirectly by altering the affinity of the ribosome for aminoacyl-tRNA, thus increasing their reactivity as acceptors for peptidyl transferase. The chain is Elongation factor P from Bacillus velezensis (strain DSM 23117 / BGSC 10A6 / LMG 26770 / FZB42) (Bacillus amyloliquefaciens subsp. plantarum).